The primary structure comprises 159 residues: SsrA-binding protein (159 aa).

The segment at 137-159 is disordered; sequence DKRETEKQRDWSREKGRLLKERG.

It belongs to the SmpB family.

The protein resides in the cytoplasm. In terms of biological role, required for rescue of stalled ribosomes mediated by trans-translation. Binds to transfer-messenger RNA (tmRNA), required for stable association of tmRNA with ribosomes. tmRNA and SmpB together mimic tRNA shape, replacing the anticodon stem-loop with SmpB. tmRNA is encoded by the ssrA gene; the 2 termini fold to resemble tRNA(Ala) and it encodes a 'tag peptide', a short internal open reading frame. During trans-translation Ala-aminoacylated tmRNA acts like a tRNA, entering the A-site of stalled ribosomes, displacing the stalled mRNA. The ribosome then switches to translate the ORF on the tmRNA; the nascent peptide is terminated with the 'tag peptide' encoded by the tmRNA and targeted for degradation. The ribosome is freed to recommence translation, which seems to be the essential function of trans-translation. This Mesorhizobium japonicum (strain LMG 29417 / CECT 9101 / MAFF 303099) (Mesorhizobium loti (strain MAFF 303099)) protein is SsrA-binding protein.